The following is a 163-amino-acid chain: Photosystem II extrinsic protein V (163 aa).

Residues 1–26 (MLKRSSWLATLLGLLTVASVSTIVYA) form the signal peptide. Heme c-binding residues include Cys63, Cys66, His67, and His118.

This sequence belongs to the cytochrome c family. PsbV subfamily. In terms of assembly, PSII is composed of 1 copy each of membrane proteins PsbA, PsbB, PsbC, PsbD, PsbE, PsbF, PsbH, PsbI, PsbJ, PsbK, PsbL, PsbM, PsbT, PsbY, PsbZ, Psb30/Ycf12, at least 3 peripheral proteins of the oxygen-evolving complex and a large number of cofactors. It forms dimeric complexes. The extrinsic subunits in red algae are PsbO (OEC33), PsbQ', cytochrome c-550 and PsbU. The cofactor is heme c.

Its subcellular location is the plastid. The protein resides in the chloroplast thylakoid membrane. Functionally, one of the extrinsic, lumenal subunits of photosystem II (PSII). PSII is a light-driven water plastoquinone oxidoreductase, using light energy to abstract electrons from H(2)O, generating a proton gradient subsequently used for ATP formation. The extrinsic proteins stabilize the structure of photosystem II oxygen-evolving complex (OEC), the ion environment of oxygen evolution and protect the OEC against heat-induced inactivation. The chain is Photosystem II extrinsic protein V from Porphyra purpurea (Red seaweed).